Reading from the N-terminus, the 193-residue chain is Potassium-transporting ATPase KdpC subunit (193 aa).

A helical membrane pass occupies residues 14 to 34 (ITFTFLVLCGLVYPLIVTGIA).

This sequence belongs to the KdpC family. As to quaternary structure, the system is composed of three essential subunits: KdpA, KdpB and KdpC.

The protein localises to the cell membrane. Part of the high-affinity ATP-driven potassium transport (or Kdp) system, which catalyzes the hydrolysis of ATP coupled with the electrogenic transport of potassium into the cytoplasm. This subunit acts as a catalytic chaperone that increases the ATP-binding affinity of the ATP-hydrolyzing subunit KdpB by the formation of a transient KdpB/KdpC/ATP ternary complex. The sequence is that of Potassium-transporting ATPase KdpC subunit from Bacillus cereus (strain B4264).